The sequence spans 179 residues: Large ribosomal subunit protein uL5 (179 aa).

This sequence belongs to the universal ribosomal protein uL5 family. As to quaternary structure, part of the 50S ribosomal subunit; part of the 5S rRNA/L5/L18/L25 subcomplex. Contacts the 5S rRNA and the P site tRNA. Forms a bridge to the 30S subunit in the 70S ribosome.

In terms of biological role, this is one of the proteins that bind and probably mediate the attachment of the 5S RNA into the large ribosomal subunit, where it forms part of the central protuberance. In the 70S ribosome it contacts protein S13 of the 30S subunit (bridge B1b), connecting the 2 subunits; this bridge is implicated in subunit movement. Contacts the P site tRNA; the 5S rRNA and some of its associated proteins might help stabilize positioning of ribosome-bound tRNAs. The protein is Large ribosomal subunit protein uL5 of Clostridium botulinum (strain Alaska E43 / Type E3).